Reading from the N-terminus, the 328-residue chain is Acetyl-coenzyme A carboxylase carboxyl transferase subunit alpha (328 aa).

In terms of domain architecture, CoA carboxyltransferase C-terminal spans 42 to 296; that stretch reads SFKEQLSILK…KESLISELHF (255 aa).

The protein belongs to the AccA family. As to quaternary structure, acetyl-CoA carboxylase is a heterohexamer composed of biotin carboxyl carrier protein (accB), biotin carboxylase (accC) and two subunits each of ACCase subunit alpha (accA) and ACCase subunit beta (accD).

The protein resides in the plastid. It localises to the chloroplast. It catalyses the reaction N(6)-carboxybiotinyl-L-lysyl-[protein] + acetyl-CoA = N(6)-biotinyl-L-lysyl-[protein] + malonyl-CoA. It functions in the pathway lipid metabolism; malonyl-CoA biosynthesis; malonyl-CoA from acetyl-CoA: step 1/1. In terms of biological role, component of the acetyl coenzyme A carboxylase (ACC) complex. First, biotin carboxylase catalyzes the carboxylation of biotin on its carrier protein (BCCP) and then the CO(2) group is transferred by the carboxyltransferase to acetyl-CoA to form malonyl-CoA. This is Acetyl-coenzyme A carboxylase carboxyl transferase subunit alpha from Gracilaria tenuistipitata var. liui (Red alga).